The primary structure comprises 314 residues: Nodulation protein D 2 (314 aa).

The HTH lysR-type domain occupies 6–63; that stretch reads LDLNLLVVLDALMTERNLTAAARSINLSQPAMSAAVARLRTNFRDDLFAMAGREFIPT. A DNA-binding region (H-T-H motif) is located at residues 23 to 42; that stretch reads LTAAARSINLSQPAMSAAVA.

It belongs to the LysR transcriptional regulatory family.

NodD regulates the expression of the nodABCFE genes which encode other nodulation proteins. NodD is also a negative regulator of its own expression. Binds flavonoids as inducers. In Rhizobium tropici, this protein is Nodulation protein D 2 (nodD2).